The primary structure comprises 469 residues: Protein apterous (469 aa).

2 disordered regions span residues 21 to 44 (GPGAREKSPTPPVAHQGSNQCGSA) and 111 to 141 (EVSDETTSGISFKTEPFGPPSSPESTSDSKI). LIM zinc-binding domains are found at residues 148 to 200 (CSGC…CKND) and 210 to 263 (CSRC…CRTH). Positions 367 to 426 (TKRMRTSFKHHQLRTMKSYFAINHNPDAKDLKQLSQKTGLPKRVLQVWFQNARAKWRRMM) form a DNA-binding region, homeobox.

As to expression, expressed in PNS and CNS.

The protein localises to the nucleus. Required for the normal development of the wing and halter imaginal disks. The sequence is that of Protein apterous (ap) from Drosophila melanogaster (Fruit fly).